Reading from the N-terminus, the 1016-residue chain is Vacuolar membrane protease (1016 aa).

The interval 1 to 36 is disordered; it reads MAETESGTGNSPSHRLSETSNASGNRSHQQSKQIAS. Residues 1–57 lie on the Cytoplasmic side of the membrane; sequence MAETESGTGNSPSHRLSETSNASGNRSHQQSKQIASYKSSKPNVFIRFIRAIFGYRK. The helical transmembrane segment at 58–78 threads the bilayer; sequence TSVTLFVFITIIATLILVELS. The Vacuolar segment spans residues 79-408; the sequence is NSLDFSVKLP…FVIPASQLVL (330 aa). Residues Asn-147 and Asn-177 are each glycosylated (N-linked (GlcNAc...) asparagine). Positions 191 and 203 each coordinate Zn(2+). Glu-238 functions as the Proton acceptor in the catalytic mechanism. 3 residues coordinate Zn(2+): Glu-239, Glu-264, and His-337. Residues 409-429 form a helical membrane-spanning segment; it reads INVTCLAVIPLISLPLLVIIF. Residues 430 to 438 lie on the Cytoplasmic side of the membrane; the sequence is NYKKNWHIG. Residues 439–459 traverse the membrane as a helical segment; the sequence is FINAIKFPVSLVLSICILNII. Topologically, residues 460-481 are vacuolar; it reads THNVIASINEFLPNSSYDSIVS. A glycan (N-linked (GlcNAc...) asparagine) is linked at Asn-473. Residues 482-502 form a helical membrane-spanning segment; that stretch reads TLYSLFLLLNYLFLNGINFIF. The Cytoplasmic portion of the chain corresponds to 503–511; that stretch reads KGYKGLYHD. The chain crosses the membrane as a helical span at residues 512–532; it reads EKLILIIQTSFIYWVLLIVST. The Vacuolar segment spans residues 533–547; sequence NKLSKNKIGNDHTGE. The chain crosses the membrane as a helical span at residues 548-568; that stretch reads FPLIMLFLLQSIGALFGLFSW. At 569–646 the chain is on the cytoplasmic side; the sequence is SFKKTTPDEL…SFSYDWSIQY (78 aa). The disordered stretch occupies residues 598–622; that stretch reads YGSNEAELESGEPISSNSSVSLNSS. Residues 612-622 show a composition bias toward low complexity; it reads SSNSSVSLNSS. Residues 647-667 form a helical membrane-spanning segment; the sequence is VVIVPLSSLIVYNTGSLLLSG. The Vacuolar segment spans residues 668–681; sequence LNKSIQESLNAEKL. An N-linked (GlcNAc...) asparagine glycan is attached at Asn-669. A helical membrane pass occupies residues 682–702; it reads IFDLIQLVAVTLAIPFLPFIF. Residues 703-706 are Cytoplasmic-facing; sequence KINR. The chain crosses the membrane as a helical span at residues 707 to 727; the sequence is LLVTALVLVFCSGFISIFLKS. Residues 728 to 1016 are Vacuolar-facing; that stretch reads PFDQLNPLKL…LVSVSKYVEI (289 aa). 5 N-linked (GlcNAc...) asparagine glycosylation sites follow: Asn-778, Asn-821, Asn-850, Asn-875, and Asn-977.

It belongs to the peptidase M28 family. It depends on Zn(2+) as a cofactor.

The protein resides in the vacuole membrane. May be involved in vacuolar sorting and osmoregulation. The chain is Vacuolar membrane protease from Debaryomyces hansenii (strain ATCC 36239 / CBS 767 / BCRC 21394 / JCM 1990 / NBRC 0083 / IGC 2968) (Yeast).